Reading from the N-terminus, the 317-residue chain is Ataxin-3 homolog (317 aa).

Residues 7-178 (INSIFFEHQE…RSDADDLISL (172 aa)) form the Josephin domain. The active-site Nucleophile is the C20. The Proton acceptor role is filled by H117. The active site involves N132. UIM domains follow at residues 219-239 (SQEE…KDGS) and 247-264 (EIDE…QAPG). Positions 254-317 (RKAIELSQAP…KKKEERNDEK (64 aa)) are disordered. Residues 276–293 (RSRSSTPPGASEPFSNAE) show a composition bias toward polar residues. Basic and acidic residues predominate over residues 294–317 (QQRRDRQKFLERFEKKKEERNDEK). The interaction with cdc-48.1 and cdc-48.2 stretch occupies residues 296 to 299 (RRDR).

Forms a complex composed of deubiquitinating enzyme atx-3, adapter ubxn-5 and cdc-48.1. Forms a complex composed of deubiquitinating enzyme atx-3, E4 ubiquitin-protein ligase ufd-2 and cdc-48.1. Interacts (via RRDR motif) with cdc-48.1 (via N-terminus) and cdc-48.2 (via N-terminus); the interaction with cdc-48.1 is not required for atx-3 enzymatic activity. Interacts (via C-terminus) with ubxn-5. May interact with ned-8. As to expression, expressed in germline (at protein level). Expressed in spermatheca, pharynx, dorsal and ventral cords, some head neurons, hypodermis, body wall muscles and coelomocytes.

It is found in the cytoplasm. It localises to the nucleus. The protein localises to the nucleolus. It carries out the reaction Thiol-dependent hydrolysis of ester, thioester, amide, peptide and isopeptide bonds formed by the C-terminal Gly of ubiquitin (a 76-residue protein attached to proteins as an intracellular targeting signal).. Functionally, acts as a chain editing deubiquitinating enzyme that binds and cleaves 'Lys-48'-linked polyubiquitin chains, with a preference for chains containing four or more ubiquitin molecules thereby modulating protein degradation by the ubiquitin-proteasome pathway. Probably by regulating the IGF-1-insulin-like pathway, regulates lifespan. Regulates germline DNA double-strand-break repair and apoptosis in response to DNA damage by recruiting E4 ubiquitin-protein ligase ufd-2 to DNA repair foci. Interacts with key regulators of transcription and represses transcription. Acts as a histone-binding protein that regulates transcription. This is Ataxin-3 homolog (atx-3) from Caenorhabditis elegans.